The sequence spans 94 residues: Large ribosomal subunit protein eL42 (94 aa).

4 residues coordinate Zn(2+): cysteine 11, cysteine 14, cysteine 71, and cysteine 74. The C4-type zinc finger occupies cysteine 11–cysteine 74.

The protein belongs to the eukaryotic ribosomal protein eL42 family. Part of the 50S ribosomal subunit. The cofactor is Zn(2+).

Functionally, binds to the 23S rRNA. The sequence is that of Large ribosomal subunit protein eL42 from Pyrococcus furiosus (strain ATCC 43587 / DSM 3638 / JCM 8422 / Vc1).